Consider the following 131-residue polypeptide: Small ribosomal subunit protein uS8 (131 aa).

The protein belongs to the universal ribosomal protein uS8 family. As to quaternary structure, part of the 30S ribosomal subunit. Contacts proteins S5 and S12.

Its function is as follows. One of the primary rRNA binding proteins, it binds directly to 16S rRNA central domain where it helps coordinate assembly of the platform of the 30S subunit. This Chlorobaculum tepidum (strain ATCC 49652 / DSM 12025 / NBRC 103806 / TLS) (Chlorobium tepidum) protein is Small ribosomal subunit protein uS8.